A 415-amino-acid polypeptide reads, in one-letter code: Multidrug resistance protein MdtA (415 aa).

The first 21 residues, 1–21 (MKGSYKSRWVIVIVVVIAAIA), serve as a signal peptide directing secretion. Residues 31 to 47 (DSQSAAPGATKQAQQSP) show a composition bias toward polar residues. Disordered stretches follow at residues 31-56 (DSQSAAPGATKQAQQSPAGGRRGMRA) and 390-415 (VVETQSATTPEEKATSREYAKKGARS). Over residues 399 to 415 (PEEKATSREYAKKGARS) the composition is skewed to basic and acidic residues.

It belongs to the membrane fusion protein (MFP) (TC 8.A.1) family. In terms of assembly, part of a tripartite efflux system composed of MdtA, MdtB and MdtC.

It is found in the cell inner membrane. The MdtABC tripartite complex confers resistance against novobiocin and deoxycholate. This chain is Multidrug resistance protein MdtA, found in Escherichia coli O6:H1 (strain CFT073 / ATCC 700928 / UPEC).